Consider the following 155-residue polypeptide: Small ribosomal subunit protein uS7 (155 aa).

This sequence belongs to the universal ribosomal protein uS7 family. As to quaternary structure, part of the 30S ribosomal subunit. Contacts proteins S9 and S11.

In terms of biological role, one of the primary rRNA binding proteins, it binds directly to 16S rRNA where it nucleates assembly of the head domain of the 30S subunit. Is located at the subunit interface close to the decoding center, probably blocks exit of the E-site tRNA. The protein is Small ribosomal subunit protein uS7 of Pseudothermotoga lettingae (strain ATCC BAA-301 / DSM 14385 / NBRC 107922 / TMO) (Thermotoga lettingae).